The following is a 156-amino-acid chain: NAD(P)H-quinone oxidoreductase subunit N (156 aa).

This sequence belongs to the complex I NdhN subunit family. As to quaternary structure, NDH-1 can be composed of about 15 different subunits; different subcomplexes with different compositions have been identified which probably have different functions.

The protein localises to the cellular thylakoid membrane. The catalysed reaction is a plastoquinone + NADH + (n+1) H(+)(in) = a plastoquinol + NAD(+) + n H(+)(out). It catalyses the reaction a plastoquinone + NADPH + (n+1) H(+)(in) = a plastoquinol + NADP(+) + n H(+)(out). In terms of biological role, NDH-1 shuttles electrons from an unknown electron donor, via FMN and iron-sulfur (Fe-S) centers, to quinones in the respiratory and/or the photosynthetic chain. The immediate electron acceptor for the enzyme in this species is believed to be plastoquinone. Couples the redox reaction to proton translocation, and thus conserves the redox energy in a proton gradient. Cyanobacterial NDH-1 also plays a role in inorganic carbon-concentration. This is NAD(P)H-quinone oxidoreductase subunit N from Prochlorococcus marinus subsp. pastoris (strain CCMP1986 / NIES-2087 / MED4).